A 112-amino-acid polypeptide reads, in one-letter code: uncharacterized protein (112 aa).

Helical transmembrane passes span 33 to 53 (IIGI…MIIF) and 69 to 89 (MNNI…HITV).

It localises to the membrane. This is an uncharacterized protein from Saccharomyces cerevisiae (strain ATCC 204508 / S288c) (Baker's yeast).